Consider the following 647-residue polypeptide: Threonine--tRNA ligase (647 aa).

The TGS domain occupies 1–63; that stretch reads MYMIQLTFPD…EHDGKIELVM (63 aa). The segment at 247–544 is catalytic; the sequence is DHRKLGKELD…LIEEYKGAFP (298 aa). 3 residues coordinate Zn(2+): Cys340, His391, and His521.

The protein belongs to the class-II aminoacyl-tRNA synthetase family. In terms of assembly, homodimer. Zn(2+) serves as cofactor.

The protein localises to the cytoplasm. The enzyme catalyses tRNA(Thr) + L-threonine + ATP = L-threonyl-tRNA(Thr) + AMP + diphosphate + H(+). Catalyzes the attachment of threonine to tRNA(Thr) in a two-step reaction: L-threonine is first activated by ATP to form Thr-AMP and then transferred to the acceptor end of tRNA(Thr). Also edits incorrectly charged L-seryl-tRNA(Thr). In Exiguobacterium sp. (strain ATCC BAA-1283 / AT1b), this protein is Threonine--tRNA ligase.